The sequence spans 897 residues: Leucine--tRNA ligase (897 aa).

Positions 42 to 52 (PYPSGKLHMGH) match the 'HIGH' region motif. The short motif at 645–649 (TMSKS) is the 'KMSKS' region element. Lysine 648 provides a ligand contact to ATP.

Belongs to the class-I aminoacyl-tRNA synthetase family.

The protein localises to the cytoplasm. It catalyses the reaction tRNA(Leu) + L-leucine + ATP = L-leucyl-tRNA(Leu) + AMP + diphosphate. The sequence is that of Leucine--tRNA ligase from Paracidovorax citrulli (strain AAC00-1) (Acidovorax citrulli).